Consider the following 271-residue polypeptide: NAD kinase (271 aa).

Aspartate 64 serves as the catalytic Proton acceptor. NAD(+) contacts are provided by residues 64-65 (DG), arginine 69, 132-133 (NE), lysine 143, arginine 160, aspartate 162, 173-178 (TAYAMS), alanine 197, and glutamine 231.

This sequence belongs to the NAD kinase family. It depends on a divalent metal cation as a cofactor.

The protein resides in the cytoplasm. The catalysed reaction is NAD(+) + ATP = ADP + NADP(+) + H(+). Functionally, involved in the regulation of the intracellular balance of NAD and NADP, and is a key enzyme in the biosynthesis of NADP. Catalyzes specifically the phosphorylation on 2'-hydroxyl of the adenosine moiety of NAD to yield NADP. This Methanocorpusculum labreanum (strain ATCC 43576 / DSM 4855 / Z) protein is NAD kinase.